The primary structure comprises 499 residues: ALBINO3-like protein 1, chloroplastic (499 aa).

The transit peptide at Met-1–Val-45 directs the protein to the chloroplast. 4 helical membrane-spanning segments follow: residues Leu-115–Val-135, Leu-184–Ile-204, Leu-263–Met-283, and Leu-302–Trp-322. A disordered region spans residues Leu-378–Arg-499. Basic and acidic residues-rich tracts occupy residues Lys-379–Ala-420, Asp-430–Glu-452, and His-486–Arg-499. Residues Gly-397 to Asp-436 are a coiled coil.

The protein belongs to the OXA1/ALB3/YidC (TC 2.A.9.2) family. As to quaternary structure, homodimer. Interacts with ALB3. Interacts with STIC2. As to expression, highly expressed in green tissues.

The protein resides in the plastid. Its subcellular location is the chloroplast thylakoid membrane. In terms of biological role, required for the insertion of some light harvesting chlorophyll-binding proteins (LHCP) into the chloroplast thylakoid membrane. Plays a role in the accumulation of some cytochrome b6f components in the thylakoid membrane. Required for the assembly and/or stability of the F(1)F(0) ATP synthase in chloroplast thylakoid membranes. Functions to stabilize or promote assembly of F(1) during its attachment to the membrane-embedded F(0) part. Participates with STIC2 in thylakoid protein targeting. May function with a specific subset of thylakoidal proteins. The sequence is that of ALBINO3-like protein 1, chloroplastic from Arabidopsis thaliana (Mouse-ear cress).